Consider the following 241-residue polypeptide: GLIPR1-like protein 1 (241 aa).

The first 22 residues, Met-1–Ser-22, serve as a signal peptide directing secretion. Positions Leu-39–Tyr-172 constitute an SCP domain. Ser-220 carries the GPI-anchor amidated serine lipid modification. The propeptide at Gly-221–Phe-241 is removed in mature form.

The protein belongs to the CRISP family. Part of a oolemmal binding multimeric complex (IZUMO1 complex) composed at least of IZUMO1 and GLIPR1L1; the complex assemblage is influenced by the maturation status of the male germ cell. Interacts with IZUMO1. In terms of processing, N-glycosylated. N-glycosylation decreases during the transit in the caput. As to expression, highly expressed in testis, where it localizes to round and elongating spermatids and differentiated spermatozoa in the seminiferous tubules and epididymis (at protein level).

The protein localises to the cytoplasmic vesicle. The protein resides in the secretory vesicle. Its subcellular location is the acrosome. It localises to the cell membrane. It is found in the membrane raft. In terms of biological role, required for optimal fertilization at the stage of sperm-oocyte fusion, plays a role in optimizing acrosome function, the translocation of IZUMO1 during the acrosome reaction and the fertilization process. Component of epididymosomes, one type of membranous microvesicules which mediate the transfer of lipids and proteins to spermatozoa plasma membrane during epididymal maturation. Also a component of the CD9-positive microvesicules found in the cauda region. The polypeptide is GLIPR1-like protein 1 (Bos taurus (Bovine)).